A 664-amino-acid polypeptide reads, in one-letter code: RBBP8 N-terminal-like protein (664 aa).

Over residues 125–140 (LRGLGDRPKPRAKEGT) the composition is skewed to basic and acidic residues. 2 disordered regions span residues 125 to 284 (LRGL…KLSP) and 369 to 664 (RAGS…WEET). The segment covering 241–255 (GTPPPLPARSSPPSP) has biased composition (pro residues). Residues 437–454 (ALDKPLDLSEWGRARGQD) are compositionally biased toward basic and acidic residues. Residues 481-496 (SGPLTRSPQALSNGTK) are compositionally biased toward polar residues. Positions 516-528 (LPGSQLSLSSPGS) are enriched in low complexity. Residues 537–552 (PLPPPHPQPPPHPQPP) show a composition bias toward pro residues. The span at 554–570 (LDGHPEPSKAEVLRPES) shows a compositional bias: basic and acidic residues. The segment covering 584 to 597 (GLSSQAEATTSTTG) has biased composition (polar residues). Residues 628–637 (KKPSRGRRKL) are compositionally biased toward basic residues. A compositionally biased stretch (polar residues) spans 654–664 (PSPNSSPWEET).

This Homo sapiens (Human) protein is RBBP8 N-terminal-like protein (RBBP8NL).